We begin with the raw amino-acid sequence, 224 residues long: Deoxyribose-phosphate aldolase (224 aa).

D93 serves as the catalytic Proton donor/acceptor. K159 serves as the catalytic Schiff-base intermediate with acetaldehyde. K189 functions as the Proton donor/acceptor in the catalytic mechanism.

This sequence belongs to the DeoC/FbaB aldolase family. DeoC type 1 subfamily.

Its subcellular location is the cytoplasm. It carries out the reaction 2-deoxy-D-ribose 5-phosphate = D-glyceraldehyde 3-phosphate + acetaldehyde. It participates in carbohydrate degradation; 2-deoxy-D-ribose 1-phosphate degradation; D-glyceraldehyde 3-phosphate and acetaldehyde from 2-deoxy-alpha-D-ribose 1-phosphate: step 2/2. Its function is as follows. Catalyzes a reversible aldol reaction between acetaldehyde and D-glyceraldehyde 3-phosphate to generate 2-deoxy-D-ribose 5-phosphate. This is Deoxyribose-phosphate aldolase from Mycobacterium bovis (strain ATCC BAA-935 / AF2122/97).